The chain runs to 409 residues: ORC1-type DNA replication protein 1 (409 aa).

Residues 63–67, tyrosine 206, and arginine 218 contribute to the ATP site; that span reads TGKTA.

This sequence belongs to the CDC6/cdc18 family.

Its function is as follows. Involved in regulation of DNA replication. The protein is ORC1-type DNA replication protein 1 (cdc6-1) of Archaeoglobus fulgidus (strain ATCC 49558 / DSM 4304 / JCM 9628 / NBRC 100126 / VC-16).